Reading from the N-terminus, the 291-residue chain is NAD kinase (291 aa).

The active-site Proton acceptor is aspartate 73. Residues 73–74, 147–148, arginine 175, aspartate 177, and glutamine 246 each bind NAD(+); these read DG and ND.

Belongs to the NAD kinase family. It depends on a divalent metal cation as a cofactor.

Its subcellular location is the cytoplasm. It catalyses the reaction NAD(+) + ATP = ADP + NADP(+) + H(+). Involved in the regulation of the intracellular balance of NAD and NADP, and is a key enzyme in the biosynthesis of NADP. Catalyzes specifically the phosphorylation on 2'-hydroxyl of the adenosine moiety of NAD to yield NADP. The chain is NAD kinase from Chromobacterium violaceum (strain ATCC 12472 / DSM 30191 / JCM 1249 / CCUG 213 / NBRC 12614 / NCIMB 9131 / NCTC 9757 / MK).